The chain runs to 304 residues: Putative S-adenosyl-L-methionine-dependent methyltransferase Mmcs_1043 (304 aa).

Residues D130 and 159–160 (DL) contribute to the S-adenosyl-L-methionine site.

Belongs to the UPF0677 family.

Exhibits S-adenosyl-L-methionine-dependent methyltransferase activity. The sequence is that of Putative S-adenosyl-L-methionine-dependent methyltransferase Mmcs_1043 from Mycobacterium sp. (strain MCS).